We begin with the raw amino-acid sequence, 208 residues long: uncharacterized protein (208 aa).

This is an uncharacterized protein from Synechococcus elongatus (strain ATCC 33912 / PCC 7942 / FACHB-805) (Anacystis nidulans R2).